The chain runs to 121 residues: Large ribosomal subunit protein eL31 (121 aa).

This sequence belongs to the eukaryotic ribosomal protein eL31 family.

This Panax ginseng (Korean ginseng) protein is Large ribosomal subunit protein eL31 (RPL31).